A 503-amino-acid chain; its full sequence is Glycerol kinase (503 aa).

Position 14 (T14) interacts with ADP. ATP contacts are provided by T14, T15, and S16. A sn-glycerol 3-phosphate-binding site is contributed by T14. R18 provides a ligand contact to ADP. Residues R84, E85, Y136, and D246 each contribute to the sn-glycerol 3-phosphate site. Glycerol-binding residues include R84, E85, Y136, D246, and Q247. The ADP site is built by T268 and G311. ATP contacts are provided by T268, G311, Q315, and G412. ADP is bound by residues G412 and N416.

Belongs to the FGGY kinase family. In terms of assembly, homotetramer and homodimer (in equilibrium). Heterodimer with EIIA-Glc. Binds 1 zinc ion per glycerol kinase EIIA-Glc dimer. The zinc ion is important for dimerization.

It catalyses the reaction glycerol + ATP = sn-glycerol 3-phosphate + ADP + H(+). The protein operates within polyol metabolism; glycerol degradation via glycerol kinase pathway; sn-glycerol 3-phosphate from glycerol: step 1/1. Activity of this regulatory enzyme is affected by several metabolites. Allosterically and non-competitively inhibited by fructose 1,6-bisphosphate (FBP) and unphosphorylated phosphocarrier protein EIIA-Glc (III-Glc), an integral component of the bacterial phosphotransferase (PTS) system. In terms of biological role, key enzyme in the regulation of glycerol uptake and metabolism. Catalyzes the phosphorylation of glycerol to yield sn-glycerol 3-phosphate. The sequence is that of Glycerol kinase from Klebsiella pneumoniae subsp. pneumoniae (strain ATCC 700721 / MGH 78578).